Here is a 94-residue protein sequence, read N- to C-terminus: Integration host factor subunit beta (94 aa).

It belongs to the bacterial histone-like protein family. Heterodimer of an alpha and a beta chain.

Its function is as follows. This protein is one of the two subunits of integration host factor, a specific DNA-binding protein that functions in genetic recombination as well as in transcriptional and translational control. The polypeptide is Integration host factor subunit beta (Vibrio campbellii (strain ATCC BAA-1116)).